Reading from the N-terminus, the 283-residue chain is Shikimate dehydrogenase (NADP(+)) (283 aa).

Shikimate is bound by residues 22 to 24 (SRS) and T69. K73 serves as the catalytic Proton acceptor. Shikimate is bound by residues N93 and D108. Residues 133–137 (GAGGS) and L222 each bind NADP(+). Residue Y224 coordinates shikimate. G245 contributes to the NADP(+) binding site.

This sequence belongs to the shikimate dehydrogenase family. In terms of assembly, homodimer.

The enzyme catalyses shikimate + NADP(+) = 3-dehydroshikimate + NADPH + H(+). It participates in metabolic intermediate biosynthesis; chorismate biosynthesis; chorismate from D-erythrose 4-phosphate and phosphoenolpyruvate: step 4/7. Its function is as follows. Involved in the biosynthesis of the chorismate, which leads to the biosynthesis of aromatic amino acids. Catalyzes the reversible NADPH linked reduction of 3-dehydroshikimate (DHSA) to yield shikimate (SA). This is Shikimate dehydrogenase (NADP(+)) from Rhodopseudomonas palustris (strain BisB5).